Reading from the N-terminus, the 121-residue chain is uncharacterized protein (121 aa).

Residues 11-31 (IFQFFVFPFYYFLLIITEIGF) traverse the membrane as a helical segment.

It is found in the membrane. This is an uncharacterized protein from Schizosaccharomyces pombe (strain 972 / ATCC 24843) (Fission yeast).